The chain runs to 438 residues: V-type ATP synthase beta chain (438 aa).

Belongs to the ATPase alpha/beta chains family.

In terms of biological role, produces ATP from ADP in the presence of a proton gradient across the membrane. The V-type beta chain is a regulatory subunit. The chain is V-type ATP synthase beta chain from Chlamydia trachomatis serovar A (strain ATCC VR-571B / DSM 19440 / HAR-13).